The chain runs to 458 residues: tRNA-2-methylthio-N(6)-dimethylallyladenosine synthase (458 aa).

The 117-residue stretch at 2-118 (PKLYIKTYGC…VFEHVDGILR (117 aa)) folds into the MTTase N-terminal domain. Positions 11, 47, 81, 170, 174, and 177 each coordinate [4Fe-4S] cluster. The 234-residue stretch at 156-389 (PGVRSTAYVS…LAVVNEIAIR (234 aa)) folds into the Radical SAM core domain. Positions 392-455 (RDLVGTVQEV…GFTLYGVPCP (64 aa)) constitute a TRAM domain.

Belongs to the methylthiotransferase family. MiaB subfamily. Monomer. It depends on [4Fe-4S] cluster as a cofactor.

It localises to the cytoplasm. It catalyses the reaction N(6)-dimethylallyladenosine(37) in tRNA + (sulfur carrier)-SH + AH2 + 2 S-adenosyl-L-methionine = 2-methylsulfanyl-N(6)-dimethylallyladenosine(37) in tRNA + (sulfur carrier)-H + 5'-deoxyadenosine + L-methionine + A + S-adenosyl-L-homocysteine + 2 H(+). Functionally, catalyzes the methylthiolation of N6-(dimethylallyl)adenosine (i(6)A), leading to the formation of 2-methylthio-N6-(dimethylallyl)adenosine (ms(2)i(6)A) at position 37 in tRNAs that read codons beginning with uridine. The chain is tRNA-2-methylthio-N(6)-dimethylallyladenosine synthase from Akkermansia muciniphila (strain ATCC BAA-835 / DSM 22959 / JCM 33894 / BCRC 81048 / CCUG 64013 / CIP 107961 / Muc).